Here is an 816-residue protein sequence, read N- to C-terminus: Larval serum protein 1 alpha chain (816 aa).

A signal peptide spans 1-16 (MKFAIAFLACVAVVTA).

This sequence belongs to the hemocyanin family. Heterohexamer, composed of three subunits, alpha, beta and gamma. In terms of tissue distribution, larval hemolymph.

The protein resides in the secreted. Its subcellular location is the extracellular space. Its function is as follows. Larval storage protein (LSP) which may serve as a store of amino acids for synthesis of adult proteins. This Drosophila melanogaster (Fruit fly) protein is Larval serum protein 1 alpha chain (Lsp1alpha).